A 318-amino-acid chain; its full sequence is Deoxyhypusine hydroxylase (318 aa).

Fe cation contacts are provided by His-65, Glu-66, His-98, and Glu-99. HEAT-like PBS-type repeat units follow at residues Val-96–Glu-122, Tyr-194–Asp-220, Phe-225–Asn-251, and Val-258–Asp-284. Fe cation-binding residues include His-227, Glu-228, His-260, and Glu-261.

This sequence belongs to the deoxyhypusine hydroxylase family. The cofactor is Fe(2+).

Its subcellular location is the cytoplasm. It is found in the nucleus. The catalysed reaction is [eIF5A protein]-deoxyhypusine + AH2 + O2 = [eIF5A protein]-hypusine + A + H2O. The protein operates within protein modification; eIF5A hypusination. In terms of biological role, catalyzes the hydroxylation of the N(6)-(4-aminobutyl)-L-lysine intermediate to form hypusine, an essential post-translational modification only found in mature eIF-5A factor. The protein is Deoxyhypusine hydroxylase (lia1) of Schizosaccharomyces pombe (strain 972 / ATCC 24843) (Fission yeast).